A 190-amino-acid chain; its full sequence is Putative serine carboxypeptidase-like 54 (190 aa).

The first 25 residues, methionine 1–glycine 25, serve as a signal peptide directing secretion. 3 N-linked (GlcNAc...) asparagine glycosylation sites follow: asparagine 58, asparagine 59, and asparagine 105.

It belongs to the peptidase S10 family.

Its subcellular location is the secreted. This Arabidopsis thaliana (Mouse-ear cress) protein is Putative serine carboxypeptidase-like 54 (SCPL54).